A 179-amino-acid chain; its full sequence is GTP-dependent dephospho-CoA kinase (179 aa).

Residues Asp55, Val57, Asp74, Lys76, and Glu128 each coordinate GTP.

The protein belongs to the GTP-dependent DPCK family.

It carries out the reaction 3'-dephospho-CoA + GTP = GDP + CoA + H(+). It participates in cofactor biosynthesis; coenzyme A biosynthesis. Functionally, catalyzes the GTP-dependent phosphorylation of the 3'-hydroxyl group of dephosphocoenzyme A to form coenzyme A (CoA). This is GTP-dependent dephospho-CoA kinase from Saccharolobus islandicus (strain M.16.4 / Kamchatka #3) (Sulfolobus islandicus).